Consider the following 587-residue polypeptide: Phosphatidate phosphatase APP1 (587 aa).

2 disordered regions span residues 1–28 (MNSQGYDESSSSTAATSGPTSGDPRMGK) and 150–178 (PPHLEEDSGDLNDSQSSIESSLSSKSENR). Composition is skewed to low complexity over residues 9-22 (SSSSTAATSGPTSG) and 163-174 (SQSSIESSLSSK). The short motif at 281-285 (DIDDT) is the DXDXT motif element. A disordered region spans residues 452 to 521 (QQRPMQMTKS…NRQLPNLDAN (70 aa)). Positions 467–483 (RRPPPPPIPSTQKPSLT) are interaction with SH3 domain of ABP1.

In terms of assembly, monomer. Interacts with ABP1. Mg(2+) is required as a cofactor. N-glycosylated.

The protein localises to the cytoplasm. Its subcellular location is the cytoskeleton. The protein resides in the actin patch. The catalysed reaction is a 1,2-diacyl-sn-glycero-3-phosphate + H2O = a 1,2-diacyl-sn-glycerol + phosphate. The enzyme catalyses 1,2-di-(9Z-octadecenoyl)-sn-glycero-3-phosphate + H2O = 1,2-di-(9Z-octadecenoyl)-sn-glycerol + phosphate. With respect to regulation, inhibited by N-ethylmaleimide. Its function is as follows. Mg(2+)-dependent phosphatidate (PA) phosphatase which catalyzes the dephosphorylation of PA to yield diacylglycerol. May play a role in vesicular trafficking through its PAP activity at cortical actin patches. Can also utilize diacylglycerol pyrophosphate and lyso-PA as substrates with specificity constants 4- and 7-fold lower, respectively, when compared with PA. In Saccharomyces cerevisiae (strain ATCC 204508 / S288c) (Baker's yeast), this protein is Phosphatidate phosphatase APP1 (APP1).